A 415-amino-acid polypeptide reads, in one-letter code: Procollagen C-endopeptidase enhancer 2 (415 aa).

The first 23 residues, 1–23 (MRGANAWAPLCLLLAAATQLSRQ), serve as a signal peptide directing secretion. 7 disulfide bridges follow: Cys33–Cys59, Cys86–Cys107, Cys154–Cys181, Cys208–Cys231, Cys297–Cys364, Cys301–Cys367, and Cys312–Cys415. CUB domains follow at residues 33–144 (CGGI…FSAA) and 154–268 (CGGL…YIFR). An NTR domain is found at 297–415 (CQQKCRRTGT…LLDALKNKQC (119 aa)). The N-linked (GlcNAc...) asparagine glycan is linked to Asn355.

Interacts with heparin with high affinity, and type I or II collagen. In terms of processing, O-glycosylated; contains sialic acid. As to expression, highly expressed in the heart, trabecular meshwork, pituitary gland, bladder, mammary gland, trachea and placenta and weakly expressed in the brain. Expressed in cartilage.

The protein localises to the secreted. Its function is as follows. Binds to the C-terminal propeptide of types I and II procollagens and may enhance the cleavage of that propeptide by BMP1. The sequence is that of Procollagen C-endopeptidase enhancer 2 (PCOLCE2) from Homo sapiens (Human).